We begin with the raw amino-acid sequence, 638 residues long: Probable ATP-binding protein YheS (638 aa).

2 ABC transporter domains span residues 2-246 and 313-531; these read IIFS…AQQT and VMIE…STSE. ATP is bound by residues 34–41 and 349–356; these read GKNGCGKS and GKNGAGKS. The interval 525–563 is disordered; that stretch reads EQNSTSENKVSEKVGDNENSVQNRKEQKRREAELRQQTA. The span at 547–558 shows a compositional bias: basic and acidic residues; it reads NRKEQKRREAEL.

Belongs to the ABC transporter superfamily. ABCF family. YheS subfamily.

In terms of biological role, genetic data indicate it may be involved in ribosome assembly or function. The protein is Probable ATP-binding protein YheS of Haemophilus influenzae (strain ATCC 51907 / DSM 11121 / KW20 / Rd).